The primary structure comprises 155 residues: Low molecular weight phosphotyrosine protein phosphatase 1 (155 aa).

Residue Cys-9 is the Nucleophile of the active site. Arg-15 is an active-site residue. The active-site Proton donor is Asp-124.

This sequence belongs to the low molecular weight phosphotyrosine protein phosphatase family. As to expression, cone cells and primary pigment cells in developing pupal retina.

It is found in the cytoplasm. It carries out the reaction O-phospho-L-tyrosyl-[protein] + H2O = L-tyrosyl-[protein] + phosphate. It catalyses the reaction a phosphate monoester + H2O = an alcohol + phosphate. Functionally, acts on tyrosine phosphorylated proteins, low-MW aryl phosphates and natural and synthetic acyl phosphates. The sequence is that of Low molecular weight phosphotyrosine protein phosphatase 1 (primo-1) from Drosophila melanogaster (Fruit fly).